A 490-amino-acid chain; its full sequence is Metal cation symporter ZIP14 (490 aa).

Positions 1–28 are cleaved as a signal peptide; sequence MKLLHPAFQSCLLLTLLGLWRTTPEAHA. Topologically, residues 29–155 are extracellular; it reads SSPGAPAISA…PSAVEVWGYG (127 aa). N-linked (GlcNAc...) asparagine glycans are attached at residues Asn75, Asn85, and Asn100. The chain crosses the membrane as a helical span at residues 156–176; the sequence is LLCVTVISLCSLLGASVVPFM. The Cytoplasmic segment spans residues 177–184; the sequence is KKTFYKRL. Residues 185–205 traverse the membrane as a helical segment; sequence LLYFIALAIGTLYSNALFQLI. Topologically, residues 206 to 222 are extracellular; that stretch reads PEAFGFNPLEDYYVSKS. Residues 223 to 243 form a helical membrane-spanning segment; sequence AVVFGGFYLFFFTEKILKILL. Residues 244-395 are Cytoplasmic-facing; sequence KQKNEHHHGH…LLNAGMSIQQ (152 aa). The short motif at 249 to 256 is the HHHGHXHX-motif element; it reads HHHGHSHY. Residues 374–379 carry the XEXPHE-motif motif; it reads EEFPHE. Residues 396–416 form a helical membrane-spanning segment; it reads ALFFNFLSACCCYLGLAFGIL. Residues 417–422 are Extracellular-facing; the sequence is AGSHFS. Residues 423-443 form a helical membrane-spanning segment; the sequence is ANWIFALAGGMFLYISLADMF. The Cytoplasmic segment spans residues 444–458; the sequence is PEMNEVCQEDERKGS. Residues 459 to 479 traverse the membrane as a helical segment; sequence ILIPFVIQNLGLLTGFTIMVV. Residues 480–490 lie on the Extracellular side of the membrane; that stretch reads LTMYSGQIQIG.

The protein belongs to the ZIP transporter (TC 2.A.5) family. In terms of assembly, homotrimer. Ubiquitinated. Ubiquitination occurs upon iron depletion. The ubiquitinated form undergoes proteasomal degradation. Post-translationally, N-glycosylated. N-glycosylation at Asn-100 is required for iron-regulated extraction of the transporter from membranes and subsequent proteasomal degradation.

The protein localises to the cell membrane. It localises to the apical cell membrane. The protein resides in the basolateral cell membrane. Its subcellular location is the early endosome membrane. It is found in the late endosome membrane. The protein localises to the lysosome membrane. It carries out the reaction Zn(2+)(out) + 2 hydrogencarbonate(out) = Zn(2+)(in) + 2 hydrogencarbonate(in). It catalyses the reaction Mn(2+)(out) + 2 hydrogencarbonate(out) = Mn(2+)(in) + 2 hydrogencarbonate(in). The catalysed reaction is Fe(2+)(out) + 2 hydrogencarbonate(out) = Fe(2+)(in) + 2 hydrogencarbonate(in). The enzyme catalyses Cd(2+)(out) + 2 hydrogencarbonate(out) = Cd(2+)(in) + 2 hydrogencarbonate(in). In terms of biological role, electroneutral transporter of the plasma membrane mediating the cellular uptake of the divalent metal cations zinc, manganese and iron that are important for tissue homeostasis, metabolism, development and immunity. Functions as an energy-dependent symporter, transporting through the membranes an electroneutral complex composed of a divalent metal cation and two bicarbonate anions. Beside these endogenous cellular substrates, can also import cadmium a non-essential metal which is cytotoxic and carcinogenic. Controls the cellular uptake by the intestinal epithelium of systemic zinc, which is in turn required to maintain tight junctions and the intestinal permeability. Modifies the activity of zinc-dependent phosphodiesterases, thereby indirectly regulating G protein-coupled receptor signaling pathways important for gluconeogenesis and chondrocyte differentiation. Regulates insulin receptor signaling, glucose uptake, glycogen synthesis and gluconeogenesis in hepatocytes through the zinc-dependent intracellular catabolism of insulin. Through zinc cellular uptake also plays a role in the adaptation of cells to endoplasmic reticulum stress. Major manganese transporter of the basolateral membrane of intestinal epithelial cells, it plays a central role in manganese systemic homeostasis through intestinal manganese uptake. Also involved in manganese extracellular uptake by cells of the blood-brain barrier. May also play a role in manganese and zinc homeostasis participating in their elimination from the blood through the hepatobiliary excretion. Also functions in the extracellular uptake of free iron. May also function intracellularly and mediate the transport from endosomes to cytosol of iron endocytosed by transferrin. Plays a role in innate immunity by regulating the expression of cytokines by activated macrophages. The polypeptide is Metal cation symporter ZIP14 (Pongo abelii (Sumatran orangutan)).